The following is a 187-amino-acid chain: Rusticyanin (187 aa).

The N-terminal stretch at 1–32 (MYTQNTMKKNWYVTVGAAAALAATVGMGTAMA) is a signal peptide. In terms of domain architecture, Plastocyanin-like spans 85–187 (SFEVHDKKNP…TGMFGKIVVK (103 aa)). Positions 117, 170, 175, and 180 each coordinate Cu cation.

As to quaternary structure, monomer. Cu cation is required as a cofactor.

The protein localises to the periplasm. Its function is as follows. Electron carrier from cytochrome c552 to the A-type oxidase. The protein is Rusticyanin (rus) of Acidithiobacillus ferrooxidans (strain ATCC 23270 / DSM 14882 / CIP 104768 / NCIMB 8455) (Ferrobacillus ferrooxidans (strain ATCC 23270)).